The sequence spans 466 residues: Light-independent protochlorophyllide reductase subunit N (466 aa).

3 residues coordinate [4Fe-4S] cluster: Cys23, Cys48, and Cys108.

Belongs to the BchN/ChlN family. Protochlorophyllide reductase is composed of three subunits; ChlL, ChlN and ChlB. Forms a heterotetramer of two ChlB and two ChlN subunits. The cofactor is [4Fe-4S] cluster.

The enzyme catalyses chlorophyllide a + oxidized 2[4Fe-4S]-[ferredoxin] + 2 ADP + 2 phosphate = protochlorophyllide a + reduced 2[4Fe-4S]-[ferredoxin] + 2 ATP + 2 H2O. Its pathway is porphyrin-containing compound metabolism; chlorophyll biosynthesis (light-independent). Its function is as follows. Component of the dark-operative protochlorophyllide reductase (DPOR) that uses Mg-ATP and reduced ferredoxin to reduce ring D of protochlorophyllide (Pchlide) to form chlorophyllide a (Chlide). This reaction is light-independent. The NB-protein (ChlN-ChlB) is the catalytic component of the complex. This chain is Light-independent protochlorophyllide reductase subunit N, found in Synechococcus elongatus (strain ATCC 33912 / PCC 7942 / FACHB-805) (Anacystis nidulans R2).